The chain runs to 694 residues: Elongation factor G 2 (694 aa).

A tr-type G domain is found at 6-282 (SKLRNIGISA…GVVDYLPDPT (277 aa)). Residues 15 to 22 (AHIDSGKT), 82 to 86 (DTPGH), and 136 to 139 (NKCD) contribute to the GTP site.

This sequence belongs to the TRAFAC class translation factor GTPase superfamily. Classic translation factor GTPase family. EF-G/EF-2 subfamily.

The protein resides in the cytoplasm. Catalyzes the GTP-dependent ribosomal translocation step during translation elongation. During this step, the ribosome changes from the pre-translocational (PRE) to the post-translocational (POST) state as the newly formed A-site-bound peptidyl-tRNA and P-site-bound deacylated tRNA move to the P and E sites, respectively. Catalyzes the coordinated movement of the two tRNA molecules, the mRNA and conformational changes in the ribosome. This is Elongation factor G 2 from Anaeromyxobacter dehalogenans (strain 2CP-C).